A 357-amino-acid chain; its full sequence is tRNA N6-adenosine threonylcarbamoyltransferase (357 aa).

Residues H119 and H123 each coordinate Fe cation. Residues 141 to 145 (LISGG), D174, G187, and N284 each bind substrate. D312 provides a ligand contact to Fe cation.

It belongs to the KAE1 / TsaD family. Requires Fe(2+) as cofactor.

The protein localises to the cytoplasm. It catalyses the reaction L-threonylcarbamoyladenylate + adenosine(37) in tRNA = N(6)-L-threonylcarbamoyladenosine(37) in tRNA + AMP + H(+). Its function is as follows. Required for the formation of a threonylcarbamoyl group on adenosine at position 37 (t(6)A37) in tRNAs that read codons beginning with adenine. Is involved in the transfer of the threonylcarbamoyl moiety of threonylcarbamoyl-AMP (TC-AMP) to the N6 group of A37, together with TsaE and TsaB. TsaD likely plays a direct catalytic role in this reaction. In Pelagibacter ubique (strain HTCC1062), this protein is tRNA N6-adenosine threonylcarbamoyltransferase.